The following is a 296-amino-acid chain: Maltose/maltodextrin transport system permease protein MalG (296 aa).

Over 1-12 (MAMVQGKSLKYR) the chain is Cytoplasmic. Residues 13–35 (VWATHIAMWAFLALIIFPLLMII) traverse the membrane as a helical segment. Over 36 to 88 (AISFREGNFATGSLIPDNPTLDHWKLALGFSITNADGTVTPPPFPVMTWLWNS) the chain is Periplasmic. In terms of domain architecture, ABC transmembrane type-1 spans 85–281 (LWNSVKVGGI…VPITAVFLLA (197 aa)). Residues 89–111 (VKVGGISAILIVALSTTSAYAFA) traverse the membrane as a helical segment. Topologically, residues 112-123 (RMKFKGKNTILK) are cytoplasmic. A helical transmembrane segment spans residues 124 to 143 (AMMIFQMFPAVLALVALYAL). Over 144-152 (FDKLGQYIP) the chain is Periplasmic. A helical membrane pass occupies residues 153–175 (FLGLNTHGGLIFAYLGGIALHVW). Over 176 to 204 (TIKGYFESIDSSLEEAAALDGATPWQAFR) the chain is Cytoplasmic. A helical membrane pass occupies residues 205–227 (LVLLPLSVPILAVVFILSFIMVI). At 228–257 (GEVPVASLLLSDVDSYTLAVGMQQYLYPQN) the chain is on the periplasmic side. A helical membrane pass occupies residues 258–280 (YLWGDFAAAAVLSAVPITAVFLL). The Cytoplasmic segment spans residues 281–296 (AQRWLVGGLTAGGVKG).

Belongs to the binding-protein-dependent transport system permease family. MalFG subfamily. In terms of assembly, the complex is composed of two ATP-binding proteins (MalK), two transmembrane proteins (MalG and MalF) and a solute-binding protein (MalE).

It is found in the cell inner membrane. Functionally, part of the ABC transporter complex MalEFGK involved in maltose/maltodextrin import. Probably responsible for the translocation of the substrate across the membrane. The chain is Maltose/maltodextrin transport system permease protein MalG (malG) from Vibrio parahaemolyticus serotype O3:K6 (strain RIMD 2210633).